Here is a 735-residue protein sequence, read N- to C-terminus: Catalase-peroxidase (735 aa).

Composition is skewed to polar residues over residues 1–10 (MENQNRQNAA) and 17–26 (SVTNQSSNRT). The interval 1-30 (MENQNRQNAAQCPFHGSVTNQSSNRTTNKD) is disordered. Residues 100–223 (WHSAGTYRIG…LAAVQMGLIY (124 aa)) constitute a cross-link (tryptophyl-tyrosyl-methioninium (Trp-Tyr) (with M-249)). The Proton acceptor role is filled by His101. Positions 223–249 (YVNPEGPDGKPDPKAAARDIRETFRRM) form a cross-link, tryptophyl-tyrosyl-methioninium (Tyr-Met) (with W-100). His264 is a binding site for heme b.

This sequence belongs to the peroxidase family. Peroxidase/catalase subfamily. In terms of assembly, homodimer or homotetramer. It depends on heme b as a cofactor. Post-translationally, formation of the three residue Trp-Tyr-Met cross-link is important for the catalase, but not the peroxidase activity of the enzyme.

The enzyme catalyses H2O2 + AH2 = A + 2 H2O. The catalysed reaction is 2 H2O2 = O2 + 2 H2O. Functionally, bifunctional enzyme with both catalase and broad-spectrum peroxidase activity. Also displays NADH oxidase, INH lyase and isonicotinoyl-NAD synthase activities. This Geobacillus stearothermophilus (Bacillus stearothermophilus) protein is Catalase-peroxidase.